The chain runs to 78 residues: Acyl carrier protein (78 aa).

The region spanning 2-77 (SDTADRVKKI…DAIKYIDENK (76 aa)) is the Carrier domain. Serine 37 bears the O-(pantetheine 4'-phosphoryl)serine mark.

Belongs to the acyl carrier protein (ACP) family. 4'-phosphopantetheine is transferred from CoA to a specific serine of apo-ACP by AcpS. This modification is essential for activity because fatty acids are bound in thioester linkage to the sulfhydryl of the prosthetic group.

It is found in the cytoplasm. It participates in lipid metabolism; fatty acid biosynthesis. Carrier of the growing fatty acid chain in fatty acid biosynthesis. The chain is Acyl carrier protein from Novosphingobium aromaticivorans (strain ATCC 700278 / DSM 12444 / CCUG 56034 / CIP 105152 / NBRC 16084 / F199).